A 296-amino-acid chain; its full sequence is Homoserine kinase (296 aa).

An ATP-binding site is contributed by 84–94 (PLARGLGSSSS).

Belongs to the GHMP kinase family. Homoserine kinase subfamily.

The protein localises to the cytoplasm. It catalyses the reaction L-homoserine + ATP = O-phospho-L-homoserine + ADP + H(+). It participates in amino-acid biosynthesis; L-threonine biosynthesis; L-threonine from L-aspartate: step 4/5. In terms of biological role, catalyzes the ATP-dependent phosphorylation of L-homoserine to L-homoserine phosphate. This chain is Homoserine kinase (thrB), found in Lactococcus lactis subsp. cremoris (Streptococcus cremoris).